The chain runs to 140 residues: Nucleoside diphosphate kinase (140 aa).

ATP-binding residues include Lys11, Phe59, Arg87, Thr93, Arg104, and Asn114. The active-site Pros-phosphohistidine intermediate is His117.

The protein belongs to the NDK family. As to quaternary structure, homotetramer. Mg(2+) is required as a cofactor.

The protein resides in the cytoplasm. It carries out the reaction a 2'-deoxyribonucleoside 5'-diphosphate + ATP = a 2'-deoxyribonucleoside 5'-triphosphate + ADP. It catalyses the reaction a ribonucleoside 5'-diphosphate + ATP = a ribonucleoside 5'-triphosphate + ADP. In terms of biological role, major role in the synthesis of nucleoside triphosphates other than ATP. The ATP gamma phosphate is transferred to the NDP beta phosphate via a ping-pong mechanism, using a phosphorylated active-site intermediate. The protein is Nucleoside diphosphate kinase of Maricaulis maris (strain MCS10) (Caulobacter maris).